Consider the following 430-residue polypeptide: Adenylosuccinate synthetase (430 aa).

Residues 13 to 19 and 41 to 43 each bind GTP; these read GDEGKGK and GHT. Asp-14 functions as the Proton acceptor in the catalytic mechanism. Mg(2+)-binding residues include Asp-14 and Gly-41. Residues 14 to 17, 39 to 42, Thr-130, Arg-144, Gln-225, Thr-240, and Arg-304 contribute to the IMP site; these read DEGK and NAGH. Residue His-42 is the Proton donor of the active site. Residue 300 to 306 coordinates substrate; that stretch reads ASTGRPR. Residues Arg-306, 332 to 334, and 414 to 416 each bind GTP; these read KLD and STG.

It belongs to the adenylosuccinate synthetase family. As to quaternary structure, homodimer. It depends on Mg(2+) as a cofactor.

It localises to the cytoplasm. It carries out the reaction IMP + L-aspartate + GTP = N(6)-(1,2-dicarboxyethyl)-AMP + GDP + phosphate + 2 H(+). Its pathway is purine metabolism; AMP biosynthesis via de novo pathway; AMP from IMP: step 1/2. Functionally, plays an important role in the de novo pathway of purine nucleotide biosynthesis. Catalyzes the first committed step in the biosynthesis of AMP from IMP. This chain is Adenylosuccinate synthetase, found in Xanthomonas axonopodis pv. citri (strain 306).